The following is a 102-amino-acid chain: NADH-quinone oxidoreductase subunit K (102 aa).

Helical transmembrane passes span 5-25 (LTQY…GIIL), 30-50 (IIII…NLVA), and 62-82 (IFAL…LAIL).

It belongs to the complex I subunit 4L family. As to quaternary structure, NDH-1 is composed of 14 different subunits. Subunits NuoA, H, J, K, L, M, N constitute the membrane sector of the complex.

It is found in the cell inner membrane. It carries out the reaction a quinone + NADH + 5 H(+)(in) = a quinol + NAD(+) + 4 H(+)(out). In terms of biological role, NDH-1 shuttles electrons from NADH, via FMN and iron-sulfur (Fe-S) centers, to quinones in the respiratory chain. The immediate electron acceptor for the enzyme in this species is believed to be ubiquinone. Couples the redox reaction to proton translocation (for every two electrons transferred, four hydrogen ions are translocated across the cytoplasmic membrane), and thus conserves the redox energy in a proton gradient. This chain is NADH-quinone oxidoreductase subunit K, found in Beijerinckia indica subsp. indica (strain ATCC 9039 / DSM 1715 / NCIMB 8712).